Here is a 409-residue protein sequence, read N- to C-terminus: SPI-1 type 3 secretion system translocon protein SctB (409 aa).

A helical transmembrane segment spans residues 119 to 140; it reads ISGMSSSAVALLAAANTLMLTL. The segment covering 350–368 has biased composition (polar residues); that stretch reads ERSEQQISQVNNRVASTAS. The tract at residues 350–378 is disordered; sequence ERSEQQISQVNNRVASTASDEARESSRKS.

The protein belongs to the SctB/SipC family. The core secretion machinery of the T3SS is composed of approximately 20 different proteins, including cytoplasmic components, a base, an export apparatus and a needle. This subunit is involved in the formation of a pore, called the translocon, in host membrane.

It localises to the secreted. It is found in the host membrane. Component of the type III secretion system 1 (SPI-1 T3SS), also called injectisome, which is used to inject bacterial effector proteins into eukaryotic host cells. SipB/SctE1 and SipC/SctB1 are inserted into the host membrane where they form a pore and allow the translocation of effector proteins into the cytosol of target cells. The protein is SPI-1 type 3 secretion system translocon protein SctB of Salmonella typhi.